Reading from the N-terminus, the 146-residue chain is MKIYVDADACPVKDVIIFEATKAEIPVTLVTSFSHYSNAEQPKGVETIYVDSGADAADYRIMQLAKKEDLIVTQDYGLASLALAKGCIVLHHKGYKYTNENIDQLLQTRYLSAMVRKSGKRTKGPKPFTAEDKEKFRALFKSIIAL.

This sequence belongs to the UPF0178 family.

The polypeptide is UPF0178 protein BCE33L2782 (Bacillus cereus (strain ZK / E33L)).